The chain runs to 187 residues: ATP synthase subunit delta (187 aa).

This sequence belongs to the ATPase delta chain family. As to quaternary structure, F-type ATPases have 2 components, F(1) - the catalytic core - and F(0) - the membrane proton channel. F(1) has five subunits: alpha(3), beta(3), gamma(1), delta(1), epsilon(1). F(0) has three main subunits: a(1), b(2) and c(10-14). The alpha and beta chains form an alternating ring which encloses part of the gamma chain. F(1) is attached to F(0) by a central stalk formed by the gamma and epsilon chains, while a peripheral stalk is formed by the delta and b chains.

The protein resides in the cell inner membrane. Functionally, f(1)F(0) ATP synthase produces ATP from ADP in the presence of a proton or sodium gradient. F-type ATPases consist of two structural domains, F(1) containing the extramembraneous catalytic core and F(0) containing the membrane proton channel, linked together by a central stalk and a peripheral stalk. During catalysis, ATP synthesis in the catalytic domain of F(1) is coupled via a rotary mechanism of the central stalk subunits to proton translocation. In terms of biological role, this protein is part of the stalk that links CF(0) to CF(1). It either transmits conformational changes from CF(0) to CF(1) or is implicated in proton conduction. In Leptospira biflexa serovar Patoc (strain Patoc 1 / Ames), this protein is ATP synthase subunit delta.